Reading from the N-terminus, the 238-residue chain is MAVVTLAEMMEAGAHFGHQTRRWNPKMSRYIYCARNGVHIIDLVQTAVCMNNAYKWTRSAARSGKRFLFVGTKKQASEVVALEAARCGASYVNQRWLGGMLTNWTTMKARIDRLKDLERMESSGAIAMRPKKEGAVLRRELERLQKYLGGLKNMRRLPDVVVLVDQRRESNAVLEARKLDIPLVSMLDTNCDPDLCEVPIPCNDDAVRSVQLILGRLADAINEGRHGSNDQRGGDSEG.

It belongs to the universal ribosomal protein uS2 family.

The chain is Small ribosomal subunit protein uS2 from Synechococcus sp. (strain CC9605).